We begin with the raw amino-acid sequence, 445 residues long: MADSTADESTNADTLWRELHKVLPEIWYDGGGKDHCEIDEAIRILTCLRKIESKNPESDISPVEVPKEFICTLSNKIMIEPMLIASGQTFEKSYILEWLKHERTCPRTKQVLYHRFMIPNHLINEVIKEWCLIHNFDRPKTSDEVIDLFTGDLESLLQRISSPSSVEDQTEAAKELALKAKRFSSVCVYFVAKIPDSITRLLTPLSISEDSNPEFLENIVTALHIFSTSEKNKTLVAENPLVLPLLAKYMKQGTVLTRIHSAATVNSLSYTDSNKIIIGNSEVLKALIHVIEEGDSLATSEAFSALSNLCPVKEISEKAVSEGLIRAAIKKIKAGSNVSMLLSLLAFVSTQNHQTTEEMDNLGLIYDLFSILRNSNSLVNDENAVVIVYNICKSYKALQNVVLREEKRDVVLEEENKHGTFTRLENQEAGRATSLAKRILEWILR.

The 74-residue stretch at 64–137 folds into the U-box domain; the sequence is EVPKEFICTL…KEWCLIHNFD (74 aa).

It carries out the reaction S-ubiquitinyl-[E2 ubiquitin-conjugating enzyme]-L-cysteine + [acceptor protein]-L-lysine = [E2 ubiquitin-conjugating enzyme]-L-cysteine + N(6)-ubiquitinyl-[acceptor protein]-L-lysine.. It participates in protein modification; protein ubiquitination. Functions as an E3 ubiquitin ligase. The chain is Putative U-box domain-containing protein 47 (PUB47) from Arabidopsis thaliana (Mouse-ear cress).